Consider the following 258-residue polypeptide: Transmembrane O-methyltransferase homolog (258 aa).

Residues Glu-104, 106-107 (GT), Ser-112, Glu-130, and Ser-160 each bind S-adenosyl-L-methionine.

Belongs to the class I-like SAM-binding methyltransferase superfamily. Cation-dependent O-methyltransferase family. Interacts with LHFPL5, PCDH15, TMC1, TMC2 and TMIE. The interaction of TOMT with TMC1 and TMC2 is required for the transportation of TMC1/2 into the stereocilia of hair cells. Interacts directly with TMC1. Widely expressed with high levels in outer and inner hair cells of the cochlea and vestibule.

The protein localises to the cytoplasm. The protein resides in the endoplasmic reticulum. The catalysed reaction is a catechol + S-adenosyl-L-methionine = a guaiacol + S-adenosyl-L-homocysteine + H(+). In terms of biological role, catalyzes the O-methylation, and thereby the inactivation, of catecholamine neurotransmitters and catechol hormones. Required for auditory function. Component of the cochlear hair cell's mechanotransduction (MET) machinery. Involved in the assembly of the asymmetric tip-link MET complex. Required for transportation of TMC1 and TMC2 proteins into the mechanically sensitive stereocilia of the hair cells. The function in MET is independent of the enzymatic activity. The sequence is that of Transmembrane O-methyltransferase homolog from Mus musculus (Mouse).